The primary structure comprises 117 residues: Small nuclear ribonucleoprotein Sm D1 (117 aa).

The Sm domain maps to 2–74 (KLVRFLMKLT…IRYYILPDSL (73 aa)). Positions 81-117 (IDDSTKPKQKKKEVVRGRGRGRGRGTRGRGRGASRGF) are disordered. A compositionally biased stretch (basic residues) spans 87–117 (PKQKKKEVVRGRGRGRGRGTRGRGRGASRGF).

This sequence belongs to the snRNP core protein family. As to quaternary structure, belongs to the 40S cdc5-associated complex (or cwf complex), a spliceosome sub-complex reminiscent of a late-stage spliceosome composed of the U2, U5 and U6 snRNAs and at least brr2, cdc5, cwf2/prp3, cwf3/syf1, cwf4/syf3, cwf5/ecm2, spp42/cwf6, cwf7/spf27, cwf8, cwf9, cwf10, cwf11, cwf12, prp45/cwf13, cwf14, cwf15, cwf16, cwf17, cwf18, cwf19, cwf20, cwf21, cwf22, cwf23, cwf24, cwf25, cwf26, cyp7/cwf27, cwf28, cwf29/ist3, lea1, msl1, prp5/cwf1, prp10, prp12/sap130, prp17, prp22, sap61, sap62, sap114, sap145, slu7, smb1, smd1, smd3, smf1, smg1 and syf2. Interacts with saf5; the interaction is direct.

It is found in the nucleus. The protein localises to the cytoplasm. Its function is as follows. Plays a role in pre-mRNA splicing as a core component of the spliceosomal U1, U2, U4 and U5 small nuclear ribonucleoproteins (snRNPs), the building blocks of the spliceosome. The polypeptide is Small nuclear ribonucleoprotein Sm D1 (smd1) (Schizosaccharomyces pombe (strain 972 / ATCC 24843) (Fission yeast)).